The sequence spans 559 residues: MVKSDIEIAQAAEELPITDVAAKLGLTSQDLEPYGYDKAKVNWQAIKRSEENGHLGKMILVTSISPTPAGEGKSTMTIGIGDAINNQLGKKTVIALREPSMGPVFGMKGGAAGGGYAQVIPMEDINLHFTGDMHALTSAIDNLSALVDNYIYQGNELGLDPEKIVIKRGLDVNDRTLRKVTIGQGSKFNGVERPASFQLTVGHELMAILCLSKDIADLKERIGKVLVGYTYEDEPVFVKDLGFQGAIAALLSTALKPNLVQTLEHTPAFVHGGPFANIAHGNNSILSTNLALHLSDYVLSEAGFGSDLGGQKFLDFVSTKLEKKPDAAVVVATVRALKYQAEKSTDHLKEENLDSLKEGFANLDRHMNNVRSYNIPVLVVINKFPTDTEAELDLLKSLIEEQGFPCEIVTAHDEGSKGAKAAAEKIVELADKSDYEIKRSYDLDDDLETKIEKVAKRIYHAADVEYTDKAKDQLVKLKKMGKDKLPVIIAKTQYSFTDNVKELGAPTGFTLHVKGLSLRNGAGFVVVSTGHILDMPGLPKHPAALDIDVDETGKISGLF.

Residue 67–74 (TPAGEGKS) coordinates ATP.

Belongs to the formate--tetrahydrofolate ligase family.

The catalysed reaction is (6S)-5,6,7,8-tetrahydrofolate + formate + ATP = (6R)-10-formyltetrahydrofolate + ADP + phosphate. The protein operates within one-carbon metabolism; tetrahydrofolate interconversion. The protein is Formate--tetrahydrofolate ligase of Lactobacillus delbrueckii subsp. bulgaricus (strain ATCC BAA-365 / Lb-18).